The primary structure comprises 496 residues: MSYPQFGYPYSSTPQFLMTTNSLSTCCESSGRSLSDSAAAASAQTPVYCPVYESRLLATARHELNSAAALGVYGNPYTSTQGYGNYVTYGADASAFYSLNAFESKDGTGSAHAGIPQTAAYYPYEHTLSQYQYDRYGTMDGSSRRKNATRETTSTLKAWLQEHRKNPYPTKGEKIMLAIITKMTLTQVSTWFANARRRLKKENKMTWPPRNKCSDEKRPYDEEEEEEEEEEDSQKATIKNEKKTVDEEVVREDKALDLSDLEDFDTIESESSECELKQPFHHQPQDGHQLRQRDCVNDHCKDVILKMPLNSTVNQELDRTNICLKSGVDQCEQDVLRGRQRSGESKACFQQQQILDSKPRIWSLAHTATSLNQTEYPSCMLKHQGLSSPSSSSSSSAVSTPVCVIDRRQDSPVTSLRNWVDGVFHDPLFRHSTLNQALTNTTVSWATTKGTLIDSGSLGRSVGNPTNVKGQLPNIPHDTNKEFIAFQKSGSKMFCS.

Residues 141–203 (GSSRRKNATR…NARRRLKKEN (63 aa)) constitute a DNA-binding region (homeobox; TALE-type). Residues 203–246 (NKMTWPPRNKCSDEKRPYDEEEEEEEEEEDSQKATIKNEKKTVD) are disordered. Residues 221–232 (DEEEEEEEEEED) show a composition bias toward acidic residues.

It belongs to the TALE/IRO homeobox family. In terms of tissue distribution, expressed in the neural plate in overlapping patterns with other irx members, which all share an anterior border of expression. At stage 20, expressed in a subset of cells in the developing hindbrain with expression appearing above the otic vesicle by stage 26. Expression in retina cells begins at stage 28, continuing at later stages and is limited to a subset of retinal cells of the optic cup. Also expressed in the ventricle of the heart from stage 36 (late tailbud) onwards. Only expressed in the pronephros at tadpole stage.

The protein resides in the nucleus. Acts partially redundantly with other irx members in neural patterning. Required for formation of the posterior forebrain, midbrain, hindbrain, and to a lesser extent, spinal cord. Patterns the neuroectoderm in both the anterior/posterior and dorsal/ventral axes. Does not appear to play a role in pronephros kidney development. The sequence is that of Iroquois-class homeodomain protein irx-4-A (irx4-a) from Xenopus laevis (African clawed frog).